We begin with the raw amino-acid sequence, 234 residues long: N-(5'-phosphoribosyl)anthranilate isomerase 1 (234 aa).

The protein belongs to the TrpF family.

The catalysed reaction is N-(5-phospho-beta-D-ribosyl)anthranilate = 1-(2-carboxyphenylamino)-1-deoxy-D-ribulose 5-phosphate. Its pathway is amino-acid biosynthesis; L-tryptophan biosynthesis; L-tryptophan from chorismate: step 3/5. This is N-(5'-phosphoribosyl)anthranilate isomerase 1 (trpF1) from Methanosarcina mazei (strain ATCC BAA-159 / DSM 3647 / Goe1 / Go1 / JCM 11833 / OCM 88) (Methanosarcina frisia).